The sequence spans 273 residues: Dermonecrotic toxin LdSicTox-alphaIB3aii (273 aa).

The active site involves H5. 2 residues coordinate Mg(2+): E25 and D27. H41 acts as the Nucleophile in catalysis. 2 disulfides stabilise this stretch: C45-C51 and C47-C190. D85 is a binding site for Mg(2+).

This sequence belongs to the arthropod phospholipase D family. Class II subfamily. Mg(2+) is required as a cofactor. Expressed by the venom gland.

It localises to the secreted. It catalyses the reaction an N-(acyl)-sphingosylphosphocholine = an N-(acyl)-sphingosyl-1,3-cyclic phosphate + choline. It carries out the reaction an N-(acyl)-sphingosylphosphoethanolamine = an N-(acyl)-sphingosyl-1,3-cyclic phosphate + ethanolamine. The enzyme catalyses a 1-acyl-sn-glycero-3-phosphocholine = a 1-acyl-sn-glycero-2,3-cyclic phosphate + choline. The catalysed reaction is a 1-acyl-sn-glycero-3-phosphoethanolamine = a 1-acyl-sn-glycero-2,3-cyclic phosphate + ethanolamine. Its function is as follows. Dermonecrotic toxins cleave the phosphodiester linkage between the phosphate and headgroup of certain phospholipids (sphingolipid and lysolipid substrates), forming an alcohol (often choline) and a cyclic phosphate. This toxin acts on sphingomyelin (SM). It may also act on ceramide phosphoethanolamine (CPE), lysophosphatidylcholine (LPC) and lysophosphatidylethanolamine (LPE), but not on lysophosphatidylserine (LPS), and lysophosphatidylglycerol (LPG). It acts by transphosphatidylation, releasing exclusively cyclic phosphate products as second products. Induces dermonecrosis, hemolysis, increased vascular permeability, edema, inflammatory response, and platelet aggregation. In Loxosceles deserta (Desert recluse spider), this protein is Dermonecrotic toxin LdSicTox-alphaIB3aii.